Here is a 253-residue protein sequence, read N- to C-terminus: 5'/3'-nucleotidase SurE (253 aa).

Residues Asp-8, Asp-9, Ser-39, and Asn-92 each contribute to the a divalent metal cation site.

Belongs to the SurE nucleotidase family. A divalent metal cation is required as a cofactor.

Its subcellular location is the cytoplasm. The catalysed reaction is a ribonucleoside 5'-phosphate + H2O = a ribonucleoside + phosphate. It catalyses the reaction a ribonucleoside 3'-phosphate + H2O = a ribonucleoside + phosphate. The enzyme catalyses [phosphate](n) + H2O = [phosphate](n-1) + phosphate + H(+). Functionally, nucleotidase with a broad substrate specificity as it can dephosphorylate various ribo- and deoxyribonucleoside 5'-monophosphates and ribonucleoside 3'-monophosphates with highest affinity to 3'-AMP. Also hydrolyzes polyphosphate (exopolyphosphatase activity) with the preference for short-chain-length substrates (P20-25). Might be involved in the regulation of dNTP and NTP pools, and in the turnover of 3'-mononucleotides produced by numerous intracellular RNases (T1, T2, and F) during the degradation of various RNAs. This Escherichia coli O127:H6 (strain E2348/69 / EPEC) protein is 5'/3'-nucleotidase SurE.